The following is a 286-amino-acid chain: Penicillin-insensitive murein endopeptidase (286 aa).

The first 22 residues, 1–22, serve as a signal peptide directing secretion; the sequence is MNKILLKTTIIFTALFSLNVVA. The Zn(2+) site is built by His117, His120, Asp127, Asp152, and His218.

The protein belongs to the peptidase M74 family. Zn(2+) serves as cofactor.

It is found in the periplasm. Murein endopeptidase that cleaves the D-alanyl-meso-2,6-diamino-pimelyl amide bond that connects peptidoglycan strands. Likely plays a role in the removal of murein from the sacculus. This is Penicillin-insensitive murein endopeptidase (mepA) from Haemophilus influenzae (strain ATCC 51907 / DSM 11121 / KW20 / Rd).